The primary structure comprises 120 residues: Large ribosomal subunit protein uL18 (120 aa).

Belongs to the universal ribosomal protein uL18 family. As to quaternary structure, part of the 50S ribosomal subunit; part of the 5S rRNA/L5/L18/L25 subcomplex. Contacts the 5S and 23S rRNAs.

Functionally, this is one of the proteins that bind and probably mediate the attachment of the 5S RNA into the large ribosomal subunit, where it forms part of the central protuberance. The sequence is that of Large ribosomal subunit protein uL18 from Staphylococcus carnosus (strain TM300).